The following is a 450-amino-acid chain: Glucose-6-phosphate isomerase (450 aa).

Glu-291 functions as the Proton donor in the catalytic mechanism. Active-site residues include His-312 and Lys-426.

The protein belongs to the GPI family.

The protein resides in the cytoplasm. The enzyme catalyses alpha-D-glucose 6-phosphate = beta-D-fructose 6-phosphate. Its pathway is carbohydrate biosynthesis; gluconeogenesis. It participates in carbohydrate degradation; glycolysis; D-glyceraldehyde 3-phosphate and glycerone phosphate from D-glucose: step 2/4. Functionally, catalyzes the reversible isomerization of glucose-6-phosphate to fructose-6-phosphate. In Clostridium perfringens (strain ATCC 13124 / DSM 756 / JCM 1290 / NCIMB 6125 / NCTC 8237 / Type A), this protein is Glucose-6-phosphate isomerase.